Here is a 122-residue protein sequence, read N- to C-terminus: Large ribosomal subunit protein uL14 (122 aa).

Belongs to the universal ribosomal protein uL14 family. As to quaternary structure, part of the 50S ribosomal subunit. Forms a cluster with proteins L3 and L19. In the 70S ribosome, L14 and L19 interact and together make contacts with the 16S rRNA in bridges B5 and B8.

In terms of biological role, binds to 23S rRNA. Forms part of two intersubunit bridges in the 70S ribosome. This chain is Large ribosomal subunit protein uL14, found in Solibacter usitatus (strain Ellin6076).